We begin with the raw amino-acid sequence, 161 residues long: Arachidonate 5-lipoxygenase-activating protein (161 aa).

The Lumenal portion of the chain corresponds to 1-8 (MDQEAVGN). Residues 9-30 (IVLLAIVTLISVVQNGFFAHKV) traverse the membrane as a helical segment. At 31-52 (EHESKTHNGRSFQRTGTLAFER) the chain is on the cytoplasmic side. The helical transmembrane segment at 53–77 (VYTANQNCVDAYPTFLVMLWSAGLL) threads the bilayer. At 78–80 (CSQ) the chain is on the lumenal side. Residues 81-102 (VPAAFAGLMYLFVRQKYFVGYL) traverse the membrane as a helical segment. Residues 103-107 (GERTQ) lie on the Cytoplasmic side of the membrane. The stretch at 108 to 115 (STPGYIFG) is an intramembrane region. The helical transmembrane segment at 116–128 (KRIILFLFAMSLA) threads the bilayer. The Lumenal portion of the chain corresponds to 129–161 (GILNYFFIALFGSDFENYIKTVTTTISPLLLIP).

The protein belongs to the MAPEG family. In terms of assembly, homotrimer. Interacts with LTC4S and ALOX5.

The protein localises to the nucleus membrane. It is found in the endoplasmic reticulum membrane. Required for leukotriene biosynthesis by ALOX5 (5-lipoxygenase). Anchors ALOX5 to the membrane. Binds arachidonic acid, and could play an essential role in the transfer of arachidonic acid to ALOX5. Binds to MK-886, a compound that blocks the biosynthesis of leukotrienes. This chain is Arachidonate 5-lipoxygenase-activating protein (ALOX5AP), found in Bos taurus (Bovine).